Consider the following 576-residue polypeptide: A-type ATP synthase subunit A (576 aa).

Position 228 to 235 (228 to 235 (GGFGTGKT)) interacts with ATP.

It belongs to the ATPase alpha/beta chains family. In terms of assembly, has multiple subunits with at least A(3), B(3), C, D, E, F, H, I and proteolipid K(x).

It localises to the cell membrane. The catalysed reaction is ATP + H2O + 4 H(+)(in) = ADP + phosphate + 5 H(+)(out). Its function is as follows. Component of the A-type ATP synthase that produces ATP from ADP in the presence of a proton gradient across the membrane. The A chain is the catalytic subunit. The sequence is that of A-type ATP synthase subunit A from Methanothrix thermoacetophila (strain DSM 6194 / JCM 14653 / NBRC 101360 / PT) (Methanosaeta thermophila).